An 83-amino-acid polypeptide reads, in one-letter code: MADQENSPLHTVGFDARFPQQNQTKHCWQSYVDYHKCVNMKGEDFAPCKVFWKTYNALCPLDWIEKWDDQREKGIFAGDINSD.

The 44-residue stretch at 24–67 (TKHCWQSYVDYHKCVNMKGEDFAPCKVFWKTYNALCPLDWIEKW) folds into the CHCH domain. Residues 27–37 (CWQSYVDYHKC) carry the Cx9C motif motif. 2 cysteine pairs are disulfide-bonded: Cys27-Cys59 and Cys37-Cys48. A Cx10C motif motif is present at residues 48–59 (CKVFWKTYNALC). The residue at position 82 (Ser82) is a Phosphoserine.

This sequence belongs to the cytochrome c oxidase subunit 6B family. Component of the cytochrome c oxidase (complex IV, CIV), a multisubunit enzyme composed of 12 subunits. The complex is composed of a catalytic core of 3 subunits COX1, COX2 and COX3, encoded in the mitochondrial DNA, and 9 supernumerary subunits COX4, COX5A (or COX5B), COX6, COX7, COX8, COX9, COX12, COX13 and COX26, which are encoded in the nuclear genome. The complex exists as a monomer or a dimer and forms supercomplexes (SCs) in the inner mitochondrial membrane with a dimer of ubiquinol-cytochrome c oxidoreductase (cytochrome b-c1 complex, complex III, CIII), resulting in 2 different assemblies (supercomplexes III(2)IV and III(2)IV(2)).

The protein resides in the mitochondrion inner membrane. It participates in energy metabolism; oxidative phosphorylation. Functionally, component of the cytochrome c oxidase, the last enzyme in the mitochondrial electron transport chain which drives oxidative phosphorylation. The respiratory chain contains 3 multisubunit complexes succinate dehydrogenase (complex II, CII), ubiquinol-cytochrome c oxidoreductase (cytochrome b-c1 complex, complex III, CIII) and cytochrome c oxidase (complex IV, CIV), that cooperate to transfer electrons derived from NADH and succinate to molecular oxygen, creating an electrochemical gradient over the inner membrane that drives transmembrane transport and the ATP synthase. Cytochrome c oxidase is the component of the respiratory chain that catalyzes the reduction of oxygen to water. Electrons originating from reduced cytochrome c in the intermembrane space (IMS) are transferred via the dinuclear copper A center (CU(A)) of COX2 and heme A of COX1 to the active site in COX1, a binuclear center (BNC) formed by heme A3 and copper B (CU(B)). The BNC reduces molecular oxygen to 2 water molecules unsing 4 electrons from cytochrome c in the IMS and 4 protons from the mitochondrial matrix. This Saccharomyces cerevisiae (strain ATCC 204508 / S288c) (Baker's yeast) protein is Cytochrome c oxidase subunit 12, mitochondrial (COX12).